Reading from the N-terminus, the 308-residue chain is tRNA uridine(34) hydroxylase (308 aa).

The 95-residue stretch at 128 to 222 folds into the Rhodanese domain; it reads ADENTVVVDT…YLEEVPREQS (95 aa). Cys182 acts as the Cysteine persulfide intermediate in catalysis.

The protein belongs to the TrhO family.

The catalysed reaction is uridine(34) in tRNA + AH2 + O2 = 5-hydroxyuridine(34) in tRNA + A + H2O. In terms of biological role, catalyzes oxygen-dependent 5-hydroxyuridine (ho5U) modification at position 34 in tRNAs. This chain is tRNA uridine(34) hydroxylase, found in Brucella suis biovar 1 (strain 1330).